The chain runs to 356 residues: NADH dehydrogenase (ubiquinone) complex I, assembly factor 6 homolog (356 aa).

The transit peptide at 1–41 (MIRNSGRILFNSLKNSNVKLINRNVIINSNIRLFSTSTNNT) directs the protein to the mitochondrion.

Belongs to the NDUFAF6 family.

The protein localises to the mitochondrion inner membrane. Involved in the assembly of mitochondrial NADH:ubiquinone oxidoreductase complex (complex I) at early stages. The chain is NADH dehydrogenase (ubiquinone) complex I, assembly factor 6 homolog from Dictyostelium discoideum (Social amoeba).